We begin with the raw amino-acid sequence, 283 residues long: NADH-ubiquinone oxidoreductase 30.4 kDa subunit, mitochondrial (283 aa).

A mitochondrion-targeting transit peptide spans Met-1–Ser-17. Residues Gly-258–Lys-283 are disordered.

This sequence belongs to the complex I 30 kDa subunit family. As to quaternary structure, complex I is composed of about 40 different subunits. This is a component of the iron-sulfur protein fraction.

It localises to the mitochondrion inner membrane. It catalyses the reaction a ubiquinone + NADH + 5 H(+)(in) = a ubiquinol + NAD(+) + 4 H(+)(out). Core subunit of the mitochondrial membrane respiratory chain NADH dehydrogenase (Complex I) that is believed to belong to the minimal assembly required for catalysis. Complex I functions in the transfer of electrons from NADH to the respiratory chain. The immediate electron acceptor for the enzyme is believed to be ubiquinone. In Neurospora crassa (strain ATCC 24698 / 74-OR23-1A / CBS 708.71 / DSM 1257 / FGSC 987), this protein is NADH-ubiquinone oxidoreductase 30.4 kDa subunit, mitochondrial (nuo-31).